Consider the following 257-residue polypeptide: Hydroxyethylthiazole kinase (257 aa).

Methionine 42 provides a ligand contact to substrate. The ATP site is built by arginine 117 and threonine 163. Residue alanine 190 participates in substrate binding.

The protein belongs to the Thz kinase family. It depends on Mg(2+) as a cofactor.

The catalysed reaction is 5-(2-hydroxyethyl)-4-methylthiazole + ATP = 4-methyl-5-(2-phosphooxyethyl)-thiazole + ADP + H(+). Its pathway is cofactor biosynthesis; thiamine diphosphate biosynthesis; 4-methyl-5-(2-phosphoethyl)-thiazole from 5-(2-hydroxyethyl)-4-methylthiazole: step 1/1. In terms of biological role, catalyzes the phosphorylation of the hydroxyl group of 4-methyl-5-beta-hydroxyethylthiazole (THZ). In Roseobacter denitrificans (strain ATCC 33942 / OCh 114) (Erythrobacter sp. (strain OCh 114)), this protein is Hydroxyethylthiazole kinase.